A 253-amino-acid chain; its full sequence is Hydroxyacylglutathione hydrolase (253 aa).

Zn(2+)-binding residues include His54, His56, Asp58, His59, His110, Asp127, and His165.

Belongs to the metallo-beta-lactamase superfamily. Glyoxalase II family. As to quaternary structure, monomer. Zn(2+) is required as a cofactor.

The catalysed reaction is an S-(2-hydroxyacyl)glutathione + H2O = a 2-hydroxy carboxylate + glutathione + H(+). Its pathway is secondary metabolite metabolism; methylglyoxal degradation; (R)-lactate from methylglyoxal: step 2/2. Thiolesterase that catalyzes the hydrolysis of S-D-lactoyl-glutathione to form glutathione and D-lactic acid. The protein is Hydroxyacylglutathione hydrolase of Idiomarina loihiensis (strain ATCC BAA-735 / DSM 15497 / L2-TR).